Reading from the N-terminus, the 3101-residue chain is MVQNTDNNTYDQLIRERNDYDDDAGSSGDVAVIGIGLRFPSGSLKESISKPYQLFNELLNGLDGIVSTFERWFDNYYLNGEIVSKFAGLLPLDEWKQFDPIFFAINPSNDNVSSIDPQQRLLLKCVWEALEDSGIDPISLRGTNTSTFIGSSTIDYCNLQKSPSETQNNIFGSSTHSIANRIGFCFDFRGESLTIDTACSSSSNAINCGYNSIKSNKSNVSIVGGVNFILDPHISKSFTQLGLLSPTGRCHTFSSDADGYVRSEGVGIVVLKKLKDAIKDSNNIYCVIKGSNSNIDGNFDKLNFYSPSKSSQCENIKLAIKSTNGQINESDIDYCETHGTGTPTGDPIELEGISRVFNTTKISSATTITTNNNNKQVLVGSIKSNIGHTEACSGVASLIKCCLMFKNKLFLQNINFKEPNPLINFKEWGLKVVTEPIKFNENKQTVMLINNFGVTGSNVCLILSEFKNNHYGNDYHKMKIDNKFNEKKRYLIPFSSNSSTSLNNYKSSIIKHSNSSSTTTSFKEFVHNQIKFKSTSLIQKSVIIASDWNEFQDESNQIKLNSSDNLISNITVEKKKSPLTVMVLCGQGSQYNKMALSLYDNEPIFRESVNRFDKELFKYYGYSVLDKLRSIDDKDLISIHQPILAQPANIMIQVSLYELYKHWGVSADIIIGHSLGEVSSAYCSGMIDFETLCYLTYHRSVAQNRTTGTGRMLSVNISSDEFINNYQSTTKYESLEIACYNSPTSIVIAGKEDLLNEITNEFKSNDIFCSMLGSLSSFHTSSQQMIKDEVCSLNISSKQPSIAVFSTVTTNLFNHQTSPFNANYVFDNIIQPVYFTQTITNLYKHIESNDMGNEITFIEVSPHPTLQYYLNQMKSTQSSYFNNGKNITIYSPLNKKKNDYNEFLKTISLLYVNNNFDINFKSQLINNNNSNNNYENQLNNLPLYQWDDKEYFKLNSSLEKIKSEGPSINNLGNNTDSPYPSYQTFIDIKKSPFQWLKGHQVSDKFYYPGMGYVHNLLSIYPNQDITISSLEFKSPLVLTEGNNQCLQTIITPLSKNEFNIKSHYKDQKTNQWILSSLGNFSLTKHNSIISNKLINIQSLKDKCNFTSISKQDLYETIRIKTNLTYKGLFQGVKQCHIGNNCSLAIVSLNEIYNQKEYNHLINNTNMNSFFNAAILDTCLHGSLVAVTQPVVLDRIEGFKYYSSNIPSFKNGNNNDDDEESNNNNNNNNNNNNNNNNNIKELYVFSDIKSRTNSQTYSISVKIILPNGTLLVDISNVVCTLVSLPNPESAIICKPPSNDIYTPYLQSKDSVINKPEQFKHLYRVDEFSVNEEDNQFISNELLLSLFYKHINNRCPSINLESLTTLEYNQFKQLYYNSSVNENLFKFIFENLKRYSNILNHDNNHSNIKSENEELYIRTTKIMAKQLFPLKDDDSITDTPQSLFESGFLDDFYKNSRVVQPLNNLLSEIIVETLKPILNEPIVFRILEAGGGTGSLSLLILEKICKLLNDNSTTSIINIEFTWSDISASFFAEIKEKFSSFTNHNNLNIIYRVLDLEKPLLDQDLKASYYDFVVMSNVMHVVKKLKPTLNEIHNILTPNGQLMFIEPPYKSFYYDSIFGCFSQWWPSYDSDIELRPDRCCMKQEKWINLLNQCNYRDTIMSGNDNLVFLIQTRKPTINEIISEQSISLDQLNSFNNIILFSNNNNSNDKNRNSCSSSILDLIRLNQELKHKIININNYNEFQSWITNNQNKDGCNKTLIIFLKSIESKMNTFNFKEITFEYIQINQLILKLELSNNFKHLLLSLNSTTDNYLSSSIVGAARYFVEFPQLDLYILNYDNVSIENNQQLSLINYLINPNNNIQKEFTINNNKVYYERYCRRSNNIKSIFQSESFETNKDNLYIQLNSNLEYQLYSKKDELNSNEVEIEIKANGINYKDYLMYIGMIGSDLDIKYGKEYEIENGIGIDNPNIGNDFSGIITRLGSNVKKFKVGDQVCGVGSKTNSSHVIVDYNYIYYKPLNYNHSVSASIPSIYITSLHSIYSIGNLKSNESILIHSAAGGIGISSLDLLKSKQHQGYIFLTVGSKDKEEYLTKKYGSLITAIYSSRNKDYVYEIKNKLIELSVVEQHQQGVDLILNTLSSEYMDSNFQCLNLSGRIVDLSITHLTPNDYMINNHYKFNMGYNNVEVVDFPSKLFKGYLKKIIKMANSNKLELSVPIIEYSNNQFKDAIEYINQRKHIGKIIVNHNQDEFNRVYNNYQNNNNHIIMKHSYDISKLNIGKNILLTGQTGIVLEILKYLIKYSNHSIENIIILSKSKLKWELELLINQSKFKKDNNIKFHFNQIDIEDSNKVNQVLNQLELNENITNIDSIIHFAFMNDIGDVQQVDMNRLNNTHGAKTIGAINLHNQSINRSWNIKQFIMASSVVSIFGSDQQCCYVSACSVIDSLSKYRHSIGLPSLAINLGAISSTGFVSRNNAIETMLKSSILNLFSPQLVISSLDLFIQNQHQYPNYCLSDFNFEILPSTLTNHFLKKFDYQINIVKKSNQIKSSSGGNGGDNNEIIRSTILNKISELLSIDESKINEDLQLTQYGMDSLVIVQLKNFIDNQLGHNIITIQQLQNNKINQSIEIIKSANNKNNKNNNNNNNNKTNKNNNNLVKKEQQSLDEFIKHETKLNESIISRPYSIKNILNNNNNKSIFLTGSTGFLGAYLLTELIKMKNVSKIYCLIRNNSKLTNPIDAIINNLKKHQLINMNKESPNQRSSKILNHTGNISNDKLSIIENSENNNKQIREDQLIKIIPMIGDISKDKFGLTEQDYLKLSNECDIIINSAADLNLKSNYEESKTVNVDSINQVIKLSVSNNSSQKLIVHFSSIAVFINHQLKDGETFEETNILPNFDTTPVGYIQSKVISEKLLTNAAESRGIPSIIIRPPDIFSNPITGIGHSNDFISLFLKVSKEIGYYPNIHKPIFTTPVTTIAKTTIDLIFNENSWNQNKSKPISIYSLNGNSIEMKSIYEFLENKFNCKEIDYQEWIKLVSKSNGKSSKRYSAFHIHDNQNLLISNFKINSLFKMSNSTKELLISIGSYNHQDWEINESIILNNINNNNKEIK.

Positions 27-465 (SGDVAVIGIG…GSNVCLILSE (439 aa)) constitute a Ketosynthase family 3 (KS3) domain. Active-site for beta-ketoacyl synthase activity residues include cysteine 199, histidine 338, and histidine 388. Positions 664–697 (GVSADIIIGHSLGEVSSAYCSGMIDFETLCYLTY) are acyl/malonyl transferase. Catalysis depends on serine 674, which acts as the For acyl/malonyl transferase activity. The N-terminal hotdog fold stretch occupies residues 965–1087 (GPSINNLGNN…GNFSLTKHNS (123 aa)). The PKS/mFAS DH domain occupies 965–1287 (GPSINNLGNN…CTLVSLPNPE (323 aa)). The active-site Proton acceptor; for dehydratase activity is the histidine 999. Positions 1104–1287 (NFTSISKQDL…CTLVSLPNPE (184 aa)) are C-terminal hotdog fold. The active-site Proton donor; for dehydratase activity is the aspartate 1176. The segment at 1209 to 1236 (KNGNNNDDDEESNNNNNNNNNNNNNNNN) is disordered. Residues 1221–1236 (NNNNNNNNNNNNNNNN) show a composition bias toward low complexity. In terms of domain architecture, Carrier spans 2550-2627 (DNNEIIRSTI…QSIEIIKSAN (78 aa)). Serine 2587 is modified (O-(pantetheine 4'-phosphoryl)serine). The interval 2627-2648 (NNKNNKNNNNNNNNKTNKNNNN) is disordered.

Pantetheine 4'-phosphate is required as a cofactor.

Its function is as follows. Probable polyketide synthase. The polypeptide is Probable polyketide synthase 32 (pks32) (Dictyostelium discoideum (Social amoeba)).